We begin with the raw amino-acid sequence, 798 residues long: MSFDPNLLHNNGHNGYPNGTSAALRETGVIEKLLTSYGFIQCSERQARLFFHCSQYNGNLQDLKVGDDVEFEVSSDRRTGKPIAIKLVKIKPEIHPEERMNGQVVCAVPHNLESKSPAAPGQSPTGSVCYERNGEVFYLTYTSEDVEGNVQLETGDKINFVIDNNKHTGAVSARNIMLLKKKQARYQGVVCAMKEAFGFIERGDVVKEIFFHYSEFKGDLETLQPGDDVEFTIKDRNGKEVATDVRLLPQGTVIFEDISIEHFEGTVTKVIPKVPSKNQNDPLPGRIKVDFVIPKELPFGDKDTKSKVTLLEGDHVRFNISTDRRDKLERATNIEVLSNTFQFTNEAREMGVIAAMRDGFGFIKCVDRDARMFFHFSEILDGNQLHIADEVEFTVVPDMLSAQRNHAIRIKKLPKGTVSFHSHSDHRFLGTVEKEATFSNPKTTSPNKGKDKEAEDGIIAYDDCGVKLTIAFQAKDVEGSTSPQIGDKVEFSISDKQRPGQQIATCVRLLGRNSNSKRLLGYVATLKDNFGFIETANHDKEIFFHYSEFSGDVDSLELGDMVEYSLSKGKGNKVSAEKVNKTHSVNGITEEANPTIYSGKVIRPLRGVDPTQIEYQGMIEIVEEGDMKGEVYPFGIVGMANKGDCLQKGESVKFQLCVLGQNAQTMAYNITPLRRATVECVKDQFGFINYEVGDSKKLFFHVKEVQDGIELQAGDEVEFSVILNQRTGKCSACNVWRVCEGPKAVAAPRPDRLVNRLKNITLDDASAPRLMVLRQPRGPDNSMGFGAERKIRQAGVID.

A CSD 1 domain is found at 26 to 87 (ETGVIEKLLT…RTGKPIAIKL (62 aa)). Lysine 81 carries the N6-acetyllysine modification. A Glycyl lysine isopeptide (Lys-Gly) (interchain with G-Cter in SUMO2) cross-link involves residue lysine 91. At serine 123 the chain carries Phosphoserine. One can recognise a CSD 2; truncated domain in the interval 136–179 (VFYLTYTSEDVEGNVQLETGDKINFVIDNNKHTGAVSARNIMLL). The CSD 3 domain occupies 186 to 245 (YQGVVCAMKEAFGFIERGDVVKEIFFHYSEFKGDLETLQPGDDVEFTIKDRNGKEVATDV). Position 276 is a phosphoserine (serine 276). In terms of domain architecture, CSD 4; truncated spans 297 to 337 (LPFGDKDTKSKVTLLEGDHVRFNISTDRRDKLERATNIEVL). CSD domains lie at 349–410 (EMGV…AIRI) and 447–507 (NKGK…ATCV). Serine 514 is subject to Phosphoserine. The region spanning 519–579 (LLGYVATLKD…KGNKVSAEKV (61 aa)) is the CSD 7 domain. Serine 584 carries the phosphoserine modification. CSD domains lie at 610–670 (PTQI…AYNI) and 674–735 (RRAT…ACNV). The 42-residue stretch at 748–789 (PRPDRLVNRLKNITLDDASAPRLMVLRQPRGPDNSMGFGAER) folds into the SUZ-C domain. Threonine 761 carries the phosphothreonine modification.

Belongs to the UNR family. In terms of assembly, component of a multi subunit autoregulatory ribonucleoprotein complex (ARC), at least composed of IGF2BP1, PABPC1 and CSDE1. Interacts with STRAP. Part of a complex associated with the FOS mCRD domain and consisting of PABPC1, PAIP1, HNRPD and SYNCRIP. The interaction with PABPC1 is direct and RNA-independent. Interacts with EIF4ENIF1/4E-T.

Its subcellular location is the cytoplasm. It is found in the stress granule. It localises to the P-body. Functionally, RNA-binding protein involved in translationally coupled mRNA turnover. Implicated with other RNA-binding proteins in the cytoplasmic deadenylation/translational and decay interplay of the FOS mRNA mediated by the major coding-region determinant of instability (mCRD) domain. Required for efficient formation of stress granules. This is Cold shock domain-containing protein E1 from Rattus norvegicus (Rat).